We begin with the raw amino-acid sequence, 242 residues long: MGRGPSIEGRKNASDAKRGKIFTKIIREISVAARAGGGDPSNNPRLRTAMDKGLSSNMSKDVIERAIKKATGELEGVEYEEVRYEGYAPGGVAVIVDCLTDNRVRAVADVRHAFSKCGGNMGTDGSVAFMFKRLGVLSFAAGADEDAVTEAAIEAGADDVVVYPEDGAIDVLTAPDTFAQVKQALATAGFEPAHAEITFRAENDIAVDGDTAVQVRKLLDMLEDLDDVQDVYSNVDQASLGA.

Belongs to the TACO1 family.

The protein localises to the cytoplasm. This chain is Probable transcriptional regulatory protein XCC3027, found in Xanthomonas campestris pv. campestris (strain ATCC 33913 / DSM 3586 / NCPPB 528 / LMG 568 / P 25).